The chain runs to 478 residues: Lactate utilization protein B (478 aa).

4Fe-4S ferredoxin-type domains lie at 303 to 333 and 352 to 381; these read GTEFQSALHCIRCAACINVCPVYRHVGGHAY and YDDHKELPYASSLCAACTEACPVKIPLHEQ. Positions 312, 315, 318, 322, 365, 368, and 372 each coordinate [4Fe-4S] cluster.

This sequence belongs to the LutB/YkgF family.

Functionally, is involved in L-lactate degradation and allows cells to grow with lactate as the sole carbon source. Has probably a role as an electron transporter during oxidation of L-lactate. This is Lactate utilization protein B from Oceanobacillus iheyensis (strain DSM 14371 / CIP 107618 / JCM 11309 / KCTC 3954 / HTE831).